We begin with the raw amino-acid sequence, 193 residues long: UPF0397 protein PA0141 (193 aa).

The next 5 helical transmembrane spans lie at 11–31, 43–63, 69–89, 109–129, and 147–167; these read VTIA…SIPI, FLVF…GLLG, FFLF…LGFL, ILFF…LIAP, and GFLV…FLMS.

This sequence belongs to the UPF0397 family.

It localises to the cell membrane. In Phytoplasma australiense, this protein is UPF0397 protein PA0141.